Here is a 535-residue protein sequence, read N- to C-terminus: Probable histone-arginine methyltransferase 1.3 (535 aa).

Met1 carries the N-acetylmethionine modification. The region spanning 141–456 (EASSAKMYFH…QSYTIDLTLS (316 aa)) is the SAM-dependent MTase PRMT-type domain. Residues Gln158, Arg167, Gly191, Glu213, and Glu243 each coordinate S-adenosyl-L-methionine. Catalysis depends on residues Glu257 and Glu266. An S-adenosyl-L-methionine-binding site is contributed by Ser271. The disordered stretch occupies residues 494 to 517 (VAQEPPLQPQPELSTQQDIQTPND). The segment covering 507-516 (STQQDIQTPN) has biased composition (polar residues).

The protein belongs to the class I-like SAM-binding methyltransferase superfamily. Protein arginine N-methyltransferase family. As to quaternary structure, interacts with PQT3 in the nucleus. Post-translationally, ubiquitinated by PQT3.

The protein localises to the nucleus. The protein resides in the cytoplasm. It carries out the reaction L-arginyl-[protein] + 2 S-adenosyl-L-methionine = N(omega),N(omega)-dimethyl-L-arginyl-[protein] + 2 S-adenosyl-L-homocysteine + 2 H(+). In terms of biological role, methylates (mono- and asymmetric dimethylation) the guanidino nitrogens of arginyl residues in several proteins involved in DNA packaging, transcription regulation, and mRNA stability. Recruited to promoters upon gene activation, methylates histone H3 and activates transcription via chromatin remodeling. Positive regulator in the oxidative stress tolerance that promotes the expression of enzymes preventing oxidative stress such as APX1 and GPX1 by histone methylation (H3R17me2a). Confers tolerance to cadmium CdCl(2) and salt NaCl stresses. The chain is Probable histone-arginine methyltransferase 1.3 (PRMT13) from Arabidopsis thaliana (Mouse-ear cress).